A 466-amino-acid polypeptide reads, in one-letter code: tRNA-2-methylthio-N(6)-dimethylallyladenosine synthase (466 aa).

An MTTase N-terminal domain is found at 21–137; the sequence is GSYWITTFGC…LEDLLNQVDN (117 aa). 6 residues coordinate [4Fe-4S] cluster: cysteine 30, cysteine 66, cysteine 100, cysteine 172, cysteine 176, and cysteine 179. Positions 158–395 constitute a Radical SAM core domain; the sequence is RDSNICAWVN…NLLVEQTAKD (238 aa). In terms of domain architecture, TRAM spans 398–466; that stretch reads TRYHNQIVEV…AFSLTGSPIQ (69 aa).

The protein belongs to the methylthiotransferase family. MiaB subfamily. In terms of assembly, monomer. The cofactor is [4Fe-4S] cluster.

It is found in the cytoplasm. It carries out the reaction N(6)-dimethylallyladenosine(37) in tRNA + (sulfur carrier)-SH + AH2 + 2 S-adenosyl-L-methionine = 2-methylsulfanyl-N(6)-dimethylallyladenosine(37) in tRNA + (sulfur carrier)-H + 5'-deoxyadenosine + L-methionine + A + S-adenosyl-L-homocysteine + 2 H(+). In terms of biological role, catalyzes the methylthiolation of N6-(dimethylallyl)adenosine (i(6)A), leading to the formation of 2-methylthio-N6-(dimethylallyl)adenosine (ms(2)i(6)A) at position 37 in tRNAs that read codons beginning with uridine. This chain is tRNA-2-methylthio-N(6)-dimethylallyladenosine synthase, found in Prochlorococcus marinus (strain SARG / CCMP1375 / SS120).